The following is a 134-amino-acid chain: ATP synthase epsilon chain (134 aa).

Belongs to the ATPase epsilon chain family. As to quaternary structure, F-type ATPases have 2 components, CF(1) - the catalytic core - and CF(0) - the membrane proton channel. CF(1) has five subunits: alpha(3), beta(3), gamma(1), delta(1), epsilon(1). CF(0) has three main subunits: a, b and c.

The protein resides in the cell membrane. Functionally, produces ATP from ADP in the presence of a proton gradient across the membrane. The polypeptide is ATP synthase epsilon chain (Alkaliphilus metalliredigens (strain QYMF)).